Reading from the N-terminus, the 89-residue chain is Small ribosomal subunit protein bS16c (89 aa).

The protein belongs to the bacterial ribosomal protein bS16 family.

It localises to the plastid. The protein localises to the chloroplast. The chain is Small ribosomal subunit protein bS16c from Morus indica (Mulberry).